The primary structure comprises 716 residues: Protein C-mannosyl-transferase DPY19L3 (716 aa).

At 1–43 (MMSIRQRREIRATEVSEDFPAQEENVKLENKLPSGCTSRRLWK) the chain is on the cytoplasmic side. The chain crosses the membrane as a helical span at residues 44-64 (ILSLTIGGTIALCIGLLTSVY). Topologically, residues 65–154 (LATLHENDLW…RVLPIQKYLE (90 aa)) are lumenal. Residue Asn118 is glycosylated (N-linked (GlcNAc...) asparagine). A helical membrane pass occupies residues 155–182 (PVYFYIYTLFGLQAIYVTALYITSWLLS). Topologically, residues 183 to 184 (GT) are cytoplasmic. The segment at residues 185–197 (WLSGLLAAFWYVT) is an intramembrane region (name=3). Over 198–215 (NRIDTTRVEFTIPLRENW) the chain is Cytoplasmic. Residues 216 to 230 (ALPFFAIQIAAITYF) constitute an intramembrane region (name=4). The Cytoplasmic segment spans residues 231 to 239 (LRPNLQPLS). The chain crosses the membrane as a helical span at residues 240–256 (ERLTLLAIFISTFLFSL). The Lumenal segment spans residues 257–262 (TWQFNQ). A helical membrane pass occupies residues 263–279 (FMMLMQALVLFTLDSLD). The Cytoplasmic portion of the chain corresponds to 280-289 (MLPAVKATWL). Residues 290–306 (YGIQITSLLLVCILQFF) traverse the membrane as a helical segment. Topologically, residues 307-308 (NS) are lumenal. Residues 309–323 (MILGSLLISFNLSVF) form a helical membrane-spanning segment. At 324–338 (IARKLQKNLKTGSFL) the chain is on the cytoplasmic side. The chain crosses the membrane as a helical span at residues 339-359 (NRLGKLLLHLFMVLCLTLFLN). Topologically, residues 360-414 (NIIKKILNLKSDEHIFKFLKAKFGLGATRDFDANLYLCEEAFGLLPFNTFGRLSD) are lumenal. The helical transmembrane segment at 415–437 (TLLFYAYIFVLSITVIVAFVVAF) threads the bilayer. The Cytoplasmic portion of the chain corresponds to 438-465 (HNLSDSTNQQSVGKMEKGTVDLKPETAY). A helical membrane pass occupies residues 466–485 (NLIHTILFGFLALSTMRMKY). Over 486-487 (LW) the chain is Lumenal. A helical membrane pass occupies residues 488–499 (TSHMCVFASFGL). Residues 500 to 522 (CSPEIWELLLKSVHLYNPKRICI) lie on the Cytoplasmic side of the membrane. The chain crosses the membrane as a helical span at residues 523 to 539 (MRYSVPILILLYLCYKF). The Lumenal portion of the chain corresponds to 540 to 716 (WPGMMDELSE…FHVYKLSRNK (177 aa)). Residue Asn704 is glycosylated (N-linked (GlcNAc...) asparagine).

This sequence belongs to the dpy-19 family. Widely expressed.

Its subcellular location is the endoplasmic reticulum membrane. It catalyses the reaction L-tryptophyl-[protein] + a di-trans,poly-cis-dolichyl beta-D-mannosyl phosphate = C-alpha-D-mannosyl-L-tryptophyl-[protein] + a di-trans,poly-cis-dolichyl phosphate + H(+). The protein operates within protein modification; protein glycosylation. Its function is as follows. C-mannosyltransferase that mediates C-mannosylation of tryptophan residues on target proteins. The reaction occurs on the luminal side of the endoplasmic reticulum and involves the transfer of a mannose unit from a dolichylphosphate mannose (Dol-P-Man) donor to an acceptor protein containing a WxxW or WxxC consensus sequence. C-mannosylates RSPO1, a Wnt signaling regulator, preferentially at the first Trp residue in the sequence WxxW. C-mannosylates the netrin receptor UNC5A, preferentially at the third tryptophan of WxxWxxWxxC sequence. Has no C-mannosyltransferase activity. In Homo sapiens (Human), this protein is Protein C-mannosyl-transferase DPY19L3 (DPY19L3).